The primary structure comprises 215 residues: MNLVGSYAHHHHHHHPHPAHPMLHEPFLFGPASRCHQERPYFQSWLLSPADAAPDFPAGGPPPAAAAAATAYGPDARPGQSPGRLEALGGRLGRRKGSGPKKERRRTESINSAFAELRECIPNVPADTKLSKIKTLRLATSYIAYLMDVLAKDAQSGDPEAFKAELKKADGGRESKRKRELQQHEGFPPALGPVEKRIKGRTGWPQQVWALELNQ.

2 disordered regions span residues Ala-53–Ser-109 and Leu-166–Ile-198. Over residues Ala-65–Gly-89 the composition is skewed to low complexity. Positions Leu-92 to Arg-104 are enriched in basic residues. The region spanning Arg-94–Leu-146 is the bHLH domain. Thr-107 carries the post-translational modification Phosphothreonine; by PLK4. Ser-109 bears the Phosphoserine; by PLK4 mark.

As to quaternary structure, efficient DNA binding requires dimerization with another bHLH protein. Forms homodimers and heterodimers with TCF3 gene products E12 and E47, HAND2 and HEY1, HEY2 and HEYL (hairy-related transcription factors). Interacts with MDFIC. Interacts with SOX15; the interaction enhances HAND1-induced differentiation of trophoblast giant cells. Post-translationally, phosphorylation by PLK4 disrupts the interaction with MDFIC and leads to translocation into the nucleoplasm, allowing dimerization and transcription factor activity. In terms of tissue distribution, heart.

The protein resides in the nucleus. It localises to the nucleoplasm. Its subcellular location is the nucleolus. Its function is as follows. Transcription factor that plays an essential role in both trophoblast giant cell differentiation and in cardiac morphogenesis. Binds the DNA sequence 5'-NRTCTG-3' (non-canonical E-box). Acts as a transcriptional repressor of SOX15. In the adult, could be required for ongoing expression of cardiac-specific genes. This Homo sapiens (Human) protein is Heart- and neural crest derivatives-expressed protein 1 (HAND1).